We begin with the raw amino-acid sequence, 394 residues long: Aspergillopepsin-1 (394 aa).

A signal peptide spans 1-20 (MVVFSKTAALVLGLSTAVSA). The propeptide at 21 to 69 (APAPTRKGFTINQIARPANKTRTVNLPGLYARSLAKFGGTVPQSVKEAA) is activation peptide. The Peptidase A1 domain maps to 85–391 (YLTPVTVGKS…NSEGPKLGFA (307 aa)). Residues D101 and D283 contribute to the active site. A disulfide bond links C319 and C354.

The protein belongs to the peptidase A1 family.

It is found in the secreted. It catalyses the reaction Hydrolysis of proteins with broad specificity. Generally favors hydrophobic residues in P1 and P1', but also accepts Lys in P1, which leads to activation of trypsinogen. Does not clot milk.. Its function is as follows. Secreted aspartic endopeptidase that allows assimilation of proteinaceous substrates. The scissile peptide bond is attacked by a nucleophilic water molecule activated by two aspartic residues in the active site. Shows a broad primary substrate specificity. Favors hydrophobic residues at the P1 and P1' positions, but also accepts a lysine residue in the P1 position, leading to the activation of trypsinogen and chymotrypsinogen A. This is Aspergillopepsin-1 from Aspergillus niger.